Here is a 151-residue protein sequence, read N- to C-terminus: UPF0178 protein CJA_1978 (151 aa).

This sequence belongs to the UPF0178 family.

The polypeptide is UPF0178 protein CJA_1978 (Cellvibrio japonicus (strain Ueda107) (Pseudomonas fluorescens subsp. cellulosa)).